The primary structure comprises 147 residues: Phosphoribosyl-AMP cyclohydrolase (147 aa).

Aspartate 97 lines the Mg(2+) pocket. Residue cysteine 98 participates in Zn(2+) binding. Mg(2+)-binding residues include aspartate 99 and aspartate 101. The Zn(2+) site is built by cysteine 114 and cysteine 121.

Belongs to the PRA-CH family. In terms of assembly, homodimer. The cofactor is Mg(2+). Requires Zn(2+) as cofactor.

Its subcellular location is the cytoplasm. It catalyses the reaction 1-(5-phospho-beta-D-ribosyl)-5'-AMP + H2O = 1-(5-phospho-beta-D-ribosyl)-5-[(5-phospho-beta-D-ribosylamino)methylideneamino]imidazole-4-carboxamide. It functions in the pathway amino-acid biosynthesis; L-histidine biosynthesis; L-histidine from 5-phospho-alpha-D-ribose 1-diphosphate: step 3/9. Its function is as follows. Catalyzes the hydrolysis of the adenine ring of phosphoribosyl-AMP. The sequence is that of Phosphoribosyl-AMP cyclohydrolase from Hydrogenovibrio crunogenus (strain DSM 25203 / XCL-2) (Thiomicrospira crunogena).